The sequence spans 861 residues: Probable beta-glucosidase A (861 aa).

A signal peptide spans 1–19; it reads MKLSILEAAALTAASVVSA. Residues Asn-62, Asn-212, and Asn-253 are each glycosylated (N-linked (GlcNAc...) asparagine). Residue Asp-281 is part of the active site. Residues Asn-316, Asn-323, Asn-355, Asn-524, Asn-543, Asn-565, Asn-669, and Asn-713 are each glycosylated (N-linked (GlcNAc...) asparagine). Residues 735 to 754 form a disordered region; it reads PEGATDGSPQPRLPASGGPG.

This sequence belongs to the glycosyl hydrolase 3 family.

Its subcellular location is the secreted. The enzyme catalyses Hydrolysis of terminal, non-reducing beta-D-glucosyl residues with release of beta-D-glucose.. Its pathway is glycan metabolism; cellulose degradation. Its function is as follows. Beta-glucosidases are one of a number of cellulolytic enzymes involved in the degradation of cellulosic biomass. Catalyzes the last step releasing glucose from the inhibitory cellobiose. The chain is Probable beta-glucosidase A (bglA) from Aspergillus terreus (strain NIH 2624 / FGSC A1156).